Consider the following 216-residue polypeptide: Cytochrome c biogenesis ATP-binding export protein CcmA (216 aa).

The 206-residue stretch at 11 to 216 (LSANELTCIR…RKITLDYRFV (206 aa)) folds into the ABC transporter domain. 43-50 (GPNGAGKT) serves as a coordination point for ATP.

Belongs to the ABC transporter superfamily. CcmA exporter (TC 3.A.1.107) family. In terms of assembly, the complex is composed of two ATP-binding proteins (CcmA) and two transmembrane proteins (CcmB).

Its subcellular location is the cell inner membrane. It catalyses the reaction heme b(in) + ATP + H2O = heme b(out) + ADP + phosphate + H(+). Functionally, part of the ABC transporter complex CcmAB involved in the biogenesis of c-type cytochromes; once thought to export heme, this seems not to be the case, but its exact role is uncertain. Responsible for energy coupling to the transport system. The protein is Cytochrome c biogenesis ATP-binding export protein CcmA of Shewanella frigidimarina (strain NCIMB 400).